We begin with the raw amino-acid sequence, 167 residues long: DNA-directed RNA polymerase II subunit rpb-9 (167 aa).

Residues 28–49 form a disordered region; it reads DDMYDQNGASPAPSQNEKPGKS. Polar residues predominate over residues 34-44; it reads NGASPAPSQNE. Positions 59, 62, 81, 84, 128, 131, 156, and 161 each coordinate Zn(2+). A C4-type zinc finger spans residues 59 to 84; that stretch reads CPECNNMLYPREDKESRVLMYSCRNC. A TFIIS-type zinc finger spans residues 124–166; it reads EEHQCPVCGKSKAVFFQAQTKKAEEEMRLYYVCASQDCQHRWT.

Belongs to the archaeal RpoM/eukaryotic RPA12/RPB9/RPC11 RNA polymerase family. Component of the RNA polymerase II (Pol II) complex consisting of 12 subunits. In terms of tissue distribution, expressed in the soma and in the germline.

The protein resides in the nucleus. It localises to the nucleolus. DNA-dependent RNA polymerase catalyzes the transcription of DNA into RNA using the four ribonucleoside triphosphates as substrates. Component of RNA polymerase II which synthesizes mRNA precursors and many functional non-coding RNAs. Pol II is the central component of the basal RNA polymerase II transcription machinery. It is composed of mobile elements that move relative to each other. RPB9 is part of the upper jaw surrounding the central large cleft and thought to grab the incoming DNA template. Recruits ints-6, a component of the Integrator complex to PIWI-interacting RNA (piRNA) genes, to mediate Integrator complex-dependent cleavage of 3' ends of nascent transcripts upon RNA Pol II backtracking to terminate transcription and generate piRNA precursors. Promotes the biogenesis of secondary 22G-siRNAs (a class of 22 nucleotide siRNAs that possess a triphosphorylated guanine residue at the 5'-end). Involved in gene silencing mediated by a class of 21 nucleotide piRNAs that possess a uracil residue at the 5'-end (also called 21U-RNAs) and guide the Piwi protein prg-1 to its DNA targets for silencing. Plays a role in small RNA-directed transgenerational epigenetic inheritance (also called RNAe) over several generations. Not required for the transgenerational inheritance of exogenous small interfering RNAs (RNAi). May play a role in the silencing of the DNA transposable elements from the DNA transposon families, Chapaev-2 and CEMUDR1. In Caenorhabditis elegans, this protein is DNA-directed RNA polymerase II subunit rpb-9.